We begin with the raw amino-acid sequence, 118 residues long: Integration host factor subunit alpha (118 aa).

The tract at residues 97-118 (NGAMPMSTEESDENTAQSASGG) is disordered.

It belongs to the bacterial histone-like protein family. As to quaternary structure, heterodimer of an alpha and a beta chain.

Its function is as follows. This protein is one of the two subunits of integration host factor, a specific DNA-binding protein that functions in genetic recombination as well as in transcriptional and translational control. The sequence is that of Integration host factor subunit alpha from Rhodopseudomonas palustris (strain ATCC BAA-98 / CGA009).